The chain runs to 355 residues: DnaJ homolog dnj-20 (355 aa).

The first 21 residues, 1 to 21 (MRILNVSLLVLASSLVAFVEC), serve as a signal peptide directing secretion. The J domain occupies 24-89 (DFYKILGVAK…EKRAMYDRHG (66 aa)).

The protein is DnaJ homolog dnj-20 of Caenorhabditis elegans.